The primary structure comprises 228 residues: Rab-like protein 2B (228 aa).

GTP contacts are provided by residues glycine 28–serine 35, aspartate 76–glutamine 80, and asparagine 133–aspartate 136. Residues leucine 200–serine 228 form a disordered region.

This sequence belongs to the small GTPase superfamily. Rab family. In terms of assembly, interacts (in its GTP-bound form) with CEP19 (via residues 121-150); this interaction is required for its localization to the mother centriole and cilium basal body. Interacts (in its GTP-bound form) with the intraflagellar transport (IFT) complex B (via the IFT74-IFT81 heterodimer). Binding to CEP19 and the IFT74-IFT81 heterodimer is mutually exclusive. Expressed in the testis.

The protein localises to the cytoplasm. Its subcellular location is the cytoskeleton. It is found in the microtubule organizing center. The protein resides in the centrosome. It localises to the centriole. The protein localises to the cilium basal body. Small GTPase required for ciliation. Activated in a guanine nucleotide exchange factor (GEF)-independent manner via its intrinsic GDP for GTP nucleotide exchange ability. Involved in ciliary assembly by binding the intraflagellar transport (IFT) complex B from the large pool pre-docked at the base of the cilium and thus triggers its entry into the cilia. This is Rab-like protein 2B (RABL2B) from Homo sapiens (Human).